Here is a 131-residue protein sequence, read N- to C-terminus: ATP synthase epsilon chain (131 aa).

Belongs to the ATPase epsilon chain family. In terms of assembly, F-type ATPases have 2 components, CF(1) - the catalytic core - and CF(0) - the membrane proton channel. CF(1) has five subunits: alpha(3), beta(3), gamma(1), delta(1), epsilon(1). CF(0) has three main subunits: a, b and c.

It localises to the cell membrane. Produces ATP from ADP in the presence of a proton gradient across the membrane. This Bacillus licheniformis (strain ATCC 14580 / DSM 13 / JCM 2505 / CCUG 7422 / NBRC 12200 / NCIMB 9375 / NCTC 10341 / NRRL NRS-1264 / Gibson 46) protein is ATP synthase epsilon chain.